The primary structure comprises 382 residues: Glutamate 5-kinase (382 aa).

Lys15 is an ATP binding site. Substrate contacts are provided by Ser62, Asp149, and Asn161. 181–182 (TD) lines the ATP pocket. One can recognise a PUA domain in the interval 288–366 (RGSVSVDAGA…VEIERLLGYS (79 aa)).

Belongs to the glutamate 5-kinase family.

The protein resides in the cytoplasm. It catalyses the reaction L-glutamate + ATP = L-glutamyl 5-phosphate + ADP. Its pathway is amino-acid biosynthesis; L-proline biosynthesis; L-glutamate 5-semialdehyde from L-glutamate: step 1/2. Its function is as follows. Catalyzes the transfer of a phosphate group to glutamate to form L-glutamate 5-phosphate. In Delftia acidovorans (strain DSM 14801 / SPH-1), this protein is Glutamate 5-kinase.